Consider the following 328-residue polypeptide: RNA binding protein fox-1 homolog 3 (328 aa).

Over residues 1–30 (MAQPYPPAQYPPPPQNGIPAEYAPPPPHPT) the composition is skewed to pro residues. Residues 1–106 (MAQPYPPAQY…QPKRLHVSNI (106 aa)) are disordered. Over residues 49–87 (TPAQTHPEQPSSDTSTQPITGAQTVPQTDEAAQTDSQPL) the composition is skewed to polar residues. One can recognise an RRM domain in the interval 99–172 (KRLHVSNIPF…NPVVGAVYGP (74 aa)). R192 bears the Asymmetric dimethylarginine; alternate mark. R192 is subject to Omega-N-methylarginine; alternate. R288 carries the post-translational modification Asymmetric dimethylarginine.

It is found in the nucleus. It localises to the cytoplasm. Pre-mRNA alternative splicing regulator. Regulates alternative splicing of RBFOX2 to enhance the production of mRNA species that are targeted for nonsense-mediated decay (NMD). The chain is RNA binding protein fox-1 homolog 3 (RBFOX3) from Bos taurus (Bovine).